A 676-amino-acid polypeptide reads, in one-letter code: Vitamin K-dependent protein S (676 aa).

Residues 1 to 24 form the signal peptide; that stretch reads MRVLGGRCGALLACLLLVLPVSEA. Positions 25–41 are excised as a propeptide; that stretch reads NFLSKQQASQVLVRKRR. In terms of domain architecture, Gla spans 42–87; it reads ANSLLEETKQGNLERECIEELCNKEEAREVFENDPETDYFYPKYLV. Glu-47, Glu-48, Glu-55, Glu-57, Glu-60, Glu-61, Glu-66, Glu-67, Glu-70, Glu-73, and Glu-77 each carry 4-carboxyglutamate. Cysteines 58 and 63 form a disulfide. The tract at residues 88–116 is thrombin-sensitive; it reads CLRSFQTGLFTAARQSTNAYPDLRSCVNA. Positions 117–155 constitute an EGF-like 1 domain; the sequence is IPDQCSPLPCNEDGYMSCKDGKASFTCTCKPGWQGEKCE. 13 disulfides stabilise this stretch: Cys-121-Cys-134, Cys-126-Cys-143, Cys-145-Cys-154, Cys-161-Cys-175, Cys-171-Cys-184, Cys-186-Cys-199, Cys-205-Cys-217, Cys-212-Cys-226, Cys-228-Cys-241, Cys-247-Cys-256, Cys-252-Cys-265, Cys-267-Cys-282, and Cys-449-Cys-475. Residue Asp-136 is modified to (3R)-3-hydroxyaspartate. In terms of domain architecture, EGF-like 2; calcium-binding spans 157–200; sequence DINECKDPSNINGGCSQICDNTPGSYHCSCKNGFVMLSNKKDCK. The EGF-like 3; calcium-binding domain maps to 201–242; that stretch reads DVDECSLKPSICGTAVCKNIPGDFECECPEGYRYNLKSKSCE. Residues 243–283 enclose the EGF-like 4; calcium-binding domain; it reads DIDECSENMCAQLCVNYPGGYTCYCDGKKGFKLAQDQKSCE. Laminin G-like domains follow at residues 299 to 475 and 484 to 666; these read LLYL…NKHC and YYPG…AHSC. Asn-499, Asn-509, and Asn-530 each carry an N-linked (GlcNAc...) asparagine glycan. Cys-639 and Cys-666 form a disulfide bridge.

In terms of processing, the iron and 2-oxoglutarate dependent 3-hydroxylation of aspartate and asparagine is (R) stereospecific within EGF domains. In terms of tissue distribution, plasma.

The protein localises to the secreted. Anticoagulant plasma protein; it is a cofactor to activated protein C in the degradation of coagulation factors Va and VIIIa. It helps to prevent coagulation and stimulating fibrinolysis. This chain is Vitamin K-dependent protein S (PROS1), found in Homo sapiens (Human).